Here is a 188-residue protein sequence, read N- to C-terminus: Protein-L-isoaspartate O-methyltransferase (188 aa).

Ser-33 is an active-site residue.

This sequence belongs to the methyltransferase superfamily. L-isoaspartyl/D-aspartyl protein methyltransferase family.

The protein resides in the cytoplasm. The catalysed reaction is [protein]-L-isoaspartate + S-adenosyl-L-methionine = [protein]-L-isoaspartate alpha-methyl ester + S-adenosyl-L-homocysteine. Catalyzes the methyl esterification of L-isoaspartyl residues in peptides and proteins that result from spontaneous decomposition of normal L-aspartyl and L-asparaginyl residues. It plays a role in the repair and/or degradation of damaged proteins. This chain is Protein-L-isoaspartate O-methyltransferase, found in Methanocella arvoryzae (strain DSM 22066 / NBRC 105507 / MRE50).